We begin with the raw amino-acid sequence, 292 residues long: NAD kinase (292 aa).

D72 acts as the Proton acceptor in catalysis. Residues 72 to 73 (DG), 146 to 147 (NE), H157, R174, D176, and 187 to 192 (TAYALS) contribute to the NAD(+) site.

This sequence belongs to the NAD kinase family. A divalent metal cation serves as cofactor.

It localises to the cytoplasm. The enzyme catalyses NAD(+) + ATP = ADP + NADP(+) + H(+). In terms of biological role, involved in the regulation of the intracellular balance of NAD and NADP, and is a key enzyme in the biosynthesis of NADP. Catalyzes specifically the phosphorylation on 2'-hydroxyl of the adenosine moiety of NAD to yield NADP. The polypeptide is NAD kinase (Shewanella oneidensis (strain ATCC 700550 / JCM 31522 / CIP 106686 / LMG 19005 / NCIMB 14063 / MR-1)).